A 140-amino-acid polypeptide reads, in one-letter code: Large ribosomal subunit protein uL24 (140 aa).

This sequence belongs to the universal ribosomal protein uL24 family. Part of the 50S ribosomal subunit.

One of two assembly initiator proteins, it binds directly to the 5'-end of the 23S rRNA, where it nucleates assembly of the 50S subunit. Its function is as follows. Located at the polypeptide exit tunnel on the outside of the subunit. The chain is Large ribosomal subunit protein uL24 from Nanoarchaeum equitans (strain Kin4-M).